The primary structure comprises 106 residues: UPF0145 protein Athe_0545 (106 aa).

Belongs to the UPF0145 family.

The protein is UPF0145 protein Athe_0545 of Caldicellulosiruptor bescii (strain ATCC BAA-1888 / DSM 6725 / KCTC 15123 / Z-1320) (Anaerocellum thermophilum).